The sequence spans 189 residues: Small ribosomal subunit protein uS7 (189 aa).

It belongs to the universal ribosomal protein uS7 family. As to quaternary structure, part of the 30S ribosomal subunit.

In terms of biological role, one of the primary rRNA binding proteins, it binds directly to 16S rRNA where it nucleates assembly of the head domain of the 30S subunit. Is located at the subunit interface close to the decoding center. This chain is Small ribosomal subunit protein uS7, found in Methanosarcina mazei (strain ATCC BAA-159 / DSM 3647 / Goe1 / Go1 / JCM 11833 / OCM 88) (Methanosarcina frisia).